Here is a 462-residue protein sequence, read N- to C-terminus: Neuronal acetylcholine receptor subunit non-alpha-2 (462 aa).

The N-terminal stretch at 1-30 is a signal peptide; it reads MTLAVIGLFTLFTSIIAITPAREFVSLAER. The Extracellular segment spans residues 31 to 234; the sequence is EDALLRELFQ…ITYSFILKRL (204 aa). N53 and N168 each carry an N-linked (GlcNAc...) asparagine glycan. Cysteines 155 and 169 form a disulfide. 3 helical membrane passes run 235 to 259, 267 to 284, and 301 to 322; these read PLFY…VFYL, VSLS…LLVI, and YLLF…VINV. Residues 323–428 are Cytoplasmic-facing; sequence HHRSSATYHP…WKFVAQVLDR (106 aa). Over residues 362–372 the composition is skewed to basic and acidic residues; it reads ELEPHSPDLKP. Residues 362-384 form a disordered region; the sequence is ELEPHSPDLKPRNKKGPPGPEGE. A helical membrane pass occupies residues 429-446; the sequence is IFLWTFLTVSVLGTILIF.

The protein belongs to the ligand-gated ion channel (TC 1.A.9) family. Acetylcholine receptor (TC 1.A.9.1) subfamily. Neuronal AChR seems to be composed of two different type of subunits: alpha and beta.

It is found in the postsynaptic cell membrane. The protein localises to the cell membrane. In terms of biological role, after binding acetylcholine, the AChR responds by an extensive change in conformation that affects all subunits and leads to opening of an ion-conducting channel across the plasma membrane. This is Neuronal acetylcholine receptor subunit non-alpha-2 from Carassius auratus (Goldfish).